The sequence spans 224 residues: uncharacterized protein (224 aa).

Residues H57, H59, D61, H62, H138, D162, and H203 each contribute to the Zn(2+) site.

This sequence belongs to the metallo-beta-lactamase superfamily. Glyoxalase II family. It depends on Zn(2+) as a cofactor.

This is an uncharacterized protein from Mycobacterium tuberculosis (strain CDC 1551 / Oshkosh).